The sequence spans 290 residues: N-acetylmannosamine kinase (290 aa).

ATP-binding positions include 6–13 (ALDIGGTK) and 132–139 (GVGGGIIL). Residues H156, C166, C168, and C173 each coordinate Zn(2+).

The protein belongs to the ROK (NagC/XylR) family. NanK subfamily. Homodimer.

It catalyses the reaction an N-acyl-D-mannosamine + ATP = an N-acyl-D-mannosamine 6-phosphate + ADP + H(+). The protein operates within amino-sugar metabolism; N-acetylneuraminate degradation; D-fructose 6-phosphate from N-acetylneuraminate: step 2/5. In terms of biological role, catalyzes the phosphorylation of N-acetylmannosamine (ManNAc) to ManNAc-6-P. In Yersinia pseudotuberculosis serotype O:1b (strain IP 31758), this protein is N-acetylmannosamine kinase.